Consider the following 516-residue polypeptide: MNVFFMFSLLFLAALGSCADDRNPLEECFRETDYEEFLEIARNGLKATSNPKHVVIVGAGMSGLSAAYVLAGAGHEVTVLEASERAGGRVRTYRNDEEGWYANLGPMRLPEKHRIVREYIRKFNLQLNEFSQENDNAWHFVKNIRKTVGEVKKDPGVLKYPVKPSEEGKSAEQLYEESLRKVEKELKRTNCSYILNKYDTYSTKEYLIKEGNLSPGAVDMIGDLMNEDAGYYVSFIESMKHDDIFAYEKRFDEIVDGMDKLPTSMYRAIEEKVHFNAQVIKIQKNAEEVTVTYHTPEKDTSFVTADYVIVCTTSRAARRIKFEPPLPLKKAHALRSVHYRSGTKIFLTCTKKFREDEGIHGGKSTTDLPSRFIYYPNHNFTSGVGVIIAYGIGDDANFFQALDLKDCGDIVINDLSLIHQLPREEIQTFCYPSMIQKWSLDKYAMGGITTFTPYQFQHFSEALTSHVDRIYFAGEYTAHAHGWIDSSIKSGLTAARDVNRASENPSGIHLSNDDEL.

The N-terminal stretch at 1–18 (MNVFFMFSLLFLAALGSC) is a signal peptide. Cysteines 28 and 191 form a disulfide. Residues 61 to 62 (MS), 81 to 82 (EA), Arg-89, and 105 to 108 (GPMR) contribute to the FAD site. Substrate is bound at residue Arg-108. Asn-190 carries an N-linked (GlcNAc...) asparagine glycan. His-241 provides a ligand contact to substrate. An FAD-binding site is contributed by Val-279. A disulfide bridge connects residues Cys-349 and Cys-430. An N-linked (GlcNAc...) asparagine glycan is attached at Asn-379. Tyr-390 provides a ligand contact to substrate. Residues Glu-475, 481-486 (HGWIDS), and 482-487 (GWIDSS) each bind FAD. Residues 481–482 (HG) and 482–483 (GW) each bind substrate.

The protein belongs to the flavin monoamine oxidase family. FIG1 subfamily. Homodimer; non-covalently linked. FAD serves as cofactor. In terms of processing, N-glycosylated. Expressed by the venom gland.

It localises to the secreted. The catalysed reaction is an L-alpha-amino acid + O2 + H2O = a 2-oxocarboxylate + H2O2 + NH4(+). In terms of biological role, catalyzes an oxidative deamination of predominantly hydrophobic and aromatic L-amino acids, thus producing hydrogen peroxide that may contribute to the diverse toxic effects of this enzyme. Exhibits diverse biological activities, such as hemorrhage, hemolysis, edema, apoptosis of vascular endothelial cells or tumor cell lines, antibacterial and antiparasitic activities, as well as regulation of platelet aggregation. Effects of snake L-amino oxidases on platelets are controversial, since they either induce aggregation or inhibit agonist-induced aggregation. These different effects are probably due to different experimental conditions. Displays dose-dependent inhibition on HIV-1 infection and replication. The chain is L-amino-acid oxidase from Trimeresurus stejnegeri (Chinese green tree viper).